Here is a 439-residue protein sequence, read N- to C-terminus: Glutamyl-tRNA reductase (439 aa).

Substrate contacts are provided by residues 48–51 (TCNR), serine 107, 112–114 (EPQ), and glutamine 118. The Nucleophile role is filled by cysteine 49. 187–192 (GAGEMA) is a binding site for NADP(+).

Belongs to the glutamyl-tRNA reductase family. In terms of assembly, homodimer.

It catalyses the reaction (S)-4-amino-5-oxopentanoate + tRNA(Glu) + NADP(+) = L-glutamyl-tRNA(Glu) + NADPH + H(+). The protein operates within porphyrin-containing compound metabolism; protoporphyrin-IX biosynthesis; 5-aminolevulinate from L-glutamyl-tRNA(Glu): step 1/2. In terms of biological role, catalyzes the NADPH-dependent reduction of glutamyl-tRNA(Glu) to glutamate 1-semialdehyde (GSA). The protein is Glutamyl-tRNA reductase of Maridesulfovibrio salexigens (strain ATCC 14822 / DSM 2638 / NCIMB 8403 / VKM B-1763) (Desulfovibrio salexigens).